The primary structure comprises 327 residues: Solute-binding protein SPO1773 (327 aa).

A signal peptide spans 1 to 26 (MTISFKGLARGVACAALVLAALPAAA). 3-hydroxybenzoate-binding positions include 39-41 (HTW), Arg150, 170-172 (RIT), and Asp211.

Belongs to the bacterial solute-binding protein 7 family. In terms of assembly, the complex is comprised of an extracytoplasmic solute-binding protein and a heteromeric permease formed by two transmembrane proteins.

The protein localises to the periplasm. Functionally, solute-binding protein that binds 3,4-dihydroxybenzoate and 3-hydroxybenzoate (in vitro). Probably part of a tripartite ATP-independent periplasmic (TRAP) transport system that mediates solute transport into the cytoplasm. This Ruegeria pomeroyi (strain ATCC 700808 / DSM 15171 / DSS-3) (Silicibacter pomeroyi) protein is Solute-binding protein SPO1773.